A 209-amino-acid polypeptide reads, in one-letter code: Large ribosomal subunit protein uL3 (209 aa).

A disordered region spans residues 128 to 156 (FAGGSRTHGQSDRLRAPGSVGGSSDPSRT).

The protein belongs to the universal ribosomal protein uL3 family. In terms of assembly, part of the 50S ribosomal subunit. Forms a cluster with proteins L14 and L19.

In terms of biological role, one of the primary rRNA binding proteins, it binds directly near the 3'-end of the 23S rRNA, where it nucleates assembly of the 50S subunit. This chain is Large ribosomal subunit protein uL3, found in Prosthecochloris aestuarii (strain DSM 271 / SK 413).